The following is a 97-amino-acid chain: UPF0235 protein Aasi_0294 (97 aa).

Belongs to the UPF0235 family.

The sequence is that of UPF0235 protein Aasi_0294 from Amoebophilus asiaticus (strain 5a2).